Consider the following 487-residue polypeptide: Protein SMG9 (487 aa).

Disordered stretches follow at residues 30 to 83 (EDAA…PPAL) and 136 to 164 (RDKG…LQPP). Over residues 42–70 (LKKDRDREQETWDRERDKDRKLERDREAE) the composition is skewed to basic and acidic residues.

It belongs to the SMG9 family.

Functionally, involved in nonsense-mediated decay (NMD) of mRNAs containing premature stop codons. Probable component of kinase complex containing nonC and recruited to stalled ribosomes. This chain is Protein SMG9, found in Drosophila melanogaster (Fruit fly).